A 444-amino-acid chain; its full sequence is Signal recognition particle 54 kDa protein (444 aa).

Residues 104 to 111 (GLQGSGKT), 184 to 188 (DTAGR), and 242 to 245 (TKLD) each bind GTP.

The protein belongs to the GTP-binding SRP family. SRP54 subfamily. As to quaternary structure, part of the signal recognition particle protein translocation system, which is composed of SRP and FtsY. Archaeal SRP consists of a 7S RNA molecule of 300 nucleotides and two protein subunits: SRP54 and SRP19.

The protein resides in the cytoplasm. The enzyme catalyses GTP + H2O = GDP + phosphate + H(+). Its function is as follows. Involved in targeting and insertion of nascent membrane proteins into the cytoplasmic membrane. Binds to the hydrophobic signal sequence of the ribosome-nascent chain (RNC) as it emerges from the ribosomes. The SRP-RNC complex is then targeted to the cytoplasmic membrane where it interacts with the SRP receptor FtsY. This is Signal recognition particle 54 kDa protein from Methanothrix thermoacetophila (strain DSM 6194 / JCM 14653 / NBRC 101360 / PT) (Methanosaeta thermophila).